The chain runs to 594 residues: Putative phospholipase B-like 2 (594 aa).

Positions 1–46 (MAAPVDGSSGGWAARALRRALALTSLTTLALLASLTGLLLSGPAGA) are cleaved as a signal peptide. Residues asparagine 93 and asparagine 115 are each glycosylated (N-linked (GlcNAc...) asparagine). An intrachain disulfide couples cysteine 147 to cysteine 157. N-linked (GlcNAc...) asparagine glycosylation is found at asparagine 236 and asparagine 441. Cysteine 497 and cysteine 500 are oxidised to a cystine. Asparagine 520 carries N-linked (GlcNAc...) asparagine glycosylation.

The protein belongs to the phospholipase B-like family. As to quaternary structure, interacts with IGF2R. In terms of processing, the p76 protein is synthesized as a 76 kDa precursor which is then processed into a N-terminal 28 kDa form and a C-terminal 40 kDa form. The C-terminal peptide is further processed into a 15 kDa form. Glycosylated; contains mannose 6-phosphate sugars. As to expression, present at highest levels in spleen, lung and brain (at protein level).

Its subcellular location is the lysosome lumen. Its function is as follows. Putative phospholipase. This Mus musculus (Mouse) protein is Putative phospholipase B-like 2 (Plbd2).